Reading from the N-terminus, the 580-residue chain is Probable inositol transporter 3 (580 aa).

12 consecutive transmembrane segments (helical) span residues 34–54 (GIGG…LLYI), 69–89 (EIIV…GGWY), 104–124 (VLFL…VIIL), 127–147 (LLVG…ISEM), 161–181 (GLLI…FVHT), 187–207 (WMLG…LTLP), 289–309 (FVGI…AGYA), 316–336 (ALAL…MMFV), 344–364 (LMII…AVFN), 455–475 (FGYL…PGMG), 493–513 (LAGG…SETF), and 524–544 (GTFL…WLLV).

It belongs to the major facilitator superfamily. Sugar transporter (TC 2.A.1.1) family.

The protein resides in the membrane. Functionally, plasma membrane inositol-proton symporter. In Arabidopsis thaliana (Mouse-ear cress), this protein is Probable inositol transporter 3 (INT3).